A 763-amino-acid chain; its full sequence is Pentatricopeptide repeat-containing protein At4g32430, mitochondrial (763 aa).

A mitochondrion-targeting transit peptide spans 1–38; the sequence is MTLLNYLHCNRSKSFLFQRFYSPYRIAHKLFDGSSQRN. PPR repeat units lie at residues 77 to 109, 110 to 140, 141 to 172, 173 to 207, 208 to 238, 239 to 274, 275 to 309, 310 to 344, 350 to 370, 371 to 405, 406 to 436, 437 to 471, 472 to 507, 508 to 538, 539 to 573, 574 to 604, and 610 to 640; these read DEVT…GFTS, FVCV…LVDP, DVVS…GVVF, DAFT…GLES, DLVV…MSFK, DMIS…GVEL, DHVS…GYES, LLEV…NVVS, SSNK…GVYP, NEVT…GFVS, EPSV…ITFR, EIIS…TMPN, EYTF…GLNS, CPVV…MSQK, NQFV…NVAP, DLVT…MIEV, and SHEH…VPGG. The interval 645 to 720 is type E motif; it reads MLQSMLGSCR…EAGFSWIDVG (76 aa). The interval 724-756 is type E(+) motif; it reads GSLTMQGFSSGDKSHPKSDEIYRMVEIIGLEMN.

The protein belongs to the PPR family. PCMP-E subfamily.

The protein resides in the mitochondrion. The polypeptide is Pentatricopeptide repeat-containing protein At4g32430, mitochondrial (PCMP-E40) (Arabidopsis thaliana (Mouse-ear cress)).